The primary structure comprises 1056 residues: MTNANTRSTPYSAVKPDVNLAKQEETILDFWDQEKIFAQSLNPEGKKTYSFYDGPPFATGLPHYGHLLAGVLKDVVPRYWTMKGYTVPRRFGWDCHGLPVEYEINKTHKIESRKDVFKMGVANYNDACRSIVKRYSTEWKTTVRRVGRWVDMENPYFTMDVSFMQSVWWVFQQLFNKGLIYEGYKVVPYSVGISTSLSNFEANQNYKMVQDPAITVMFKLVNQPDTAIMAWTTTPWTLPSNLALAVGNDIEYVKVQEKATGRKLIMAQALLSSVFKKADEEVEVLQMMKGTELVGLTYEPLFPYFGDRADKGAFRIISSDHVTTESGTGVVHMAPAFGEEDYYACAKAGIPMVNPVDDDGMFTMEVPDYAGKRVKEADKDIIADLKKRGNLFKQDTIQHSYPFCYRSDTPLIYRAVSSWFVAVEKIKEELIANNKQTSWVPDHLRDGRFGNWLEGARDWAISRNRFWGTPLPIWRNAEGEVMCIGSRAELEKLSGQKVDDLHIEFVDKITIPSPTGKSPLKRVDGVLDCWFESGSMPYAQWGYPETSVEDFKKAFPADFIAEGLDQTRGWFYTLSIIGTALFNQAPFKNVVVNGLVLAEDGRKMSKSLKNYPDPMEVLNQHGADALRLYLIDSPVVKAQELKFSEKGVYDIVRKILLRWWNSYSFFANYANIDGFVPKGDAKKSPNILDQWVLSRLNGLIANTHKEMDAYRLYNVVPHLLQFIEDLTNTYIRFNRSLFWQDGMPETKRYAYETLHEVLVTLSRLMAPFAPFMSEVTYKNLAQVLKDKKDSVHLESFPTADLSMLRPELEEAVKAMDTLVTLGRNHREKIGVKAKIPLNEIKIIHRSAELLETLKKFEPFFVDELNFRKVVYNPNEDQFVQVTAKANFPVLGKRLGPKMKAVGAGIMSMSLENILKLEGGGVVVIEGEEISLSDVEIRRAPKGDNANLSVHQIVSIEVDPTVTPEQEREGLAREIMRKIQVARKTADFQMDDKITLEIACDGALLDALNAHKDMITGETLTKNLNILALTAEPNGKHTETSDIDGQVIKIGVTNLPR.

The 'HIGH' region motif lies at 56–66 (PFATGLPHYGH). The 'KMSKS' region signature appears at 603 to 607 (KMSKS). Lysine 606 contacts ATP.

Belongs to the class-I aminoacyl-tRNA synthetase family. IleS type 2 subfamily. In terms of assembly, monomer. The cofactor is Zn(2+).

The protein localises to the cytoplasm. It catalyses the reaction tRNA(Ile) + L-isoleucine + ATP = L-isoleucyl-tRNA(Ile) + AMP + diphosphate. In terms of biological role, catalyzes the attachment of isoleucine to tRNA(Ile). As IleRS can inadvertently accommodate and process structurally similar amino acids such as valine, to avoid such errors it has two additional distinct tRNA(Ile)-dependent editing activities. One activity is designated as 'pretransfer' editing and involves the hydrolysis of activated Val-AMP. The other activity is designated 'posttransfer' editing and involves deacylation of mischarged Val-tRNA(Ile). This Bdellovibrio bacteriovorus (strain ATCC 15356 / DSM 50701 / NCIMB 9529 / HD100) protein is Isoleucine--tRNA ligase.